The chain runs to 2437 residues: Polyprotein P1234 (2437 aa).

The region spanning 28-259 (EAQQVTPNDH…ESRRLLKSWH (232 aa)) is the Alphavirus-like MT domain. The segment at 244-263 (GSTLYIESRRLLKSWHLPSV) is nsP1 membrane-binding. Residues cysteine 417 and cysteine 419 are each lipidated (S-palmitoyl cysteine; by host). The (+)RNA virus helicase ATP-binding domain occupies 691 to 843 (DLINPPFHEF…HNICTEVDHK (153 aa)). 722–729 (GVPGSGKS) is an a ribonucleoside 5'-triphosphate binding site. In terms of domain architecture, (+)RNA virus helicase C-terminal spans 844 to 992 (SISRRCTLPI…LEDWQREHDT (149 aa)). The Peptidase C9 domain occupies 1005–1327 (DVFQNKAKVC…GKLSSIYAGT (323 aa)). The nucleolus localization signal stretch occupies residues 1006 to 1025 (VFQNKAKVCWAKCLVPVLET). Catalysis depends on cysteine 1014, which acts as the For cysteine protease nsP2 activity. Positions 1059 to 1068 (TKIYGVDLDS) match the Nuclear export signal motif. Catalysis depends on histidine 1084, which acts as the For cysteine protease nsP2 activity. Positions 1182 to 1186 (PRRKV) match the Nuclear localization signal motif. A Macro domain is found at 1335 to 1493 (APAYAVKRAD…QKIKTVLQNR (159 aa)). Positions 1344, 1358, 1366, 1446, 1447, and 1448 each coordinate ADP-D-ribose. Zn(2+)-binding residues include cysteine 1596, cysteine 1598, cysteine 1621, and cysteine 1639. A compositionally biased stretch (low complexity) spans 1675 to 1684 (TSDSSSLSTF). A disordered region spans residues 1675–1729 (TSDSSSLSTFPDLESAEELDHDSQSVRPALNEPDDHQPTPTAELATHPVPPPRPN). Short sequence motifs (FGDF; binding to host G3BP1) lie at residues 1792–1795 (FGAP) and 1804–1807 (FGDF). The RdRp catalytic domain maps to 2191–2306 (DHVLETDIAS…HGVVSDKLMA (116 aa)).

As to quaternary structure, interacts with non-structural protein 3. Interacts with RNA-directed RNA polymerase nsP4. Interacts with protease nsP2. interacts with itself. In terms of assembly, interacts with mRNA-capping enzyme nsP1. Interacts with host DDX1. Interacts with host DDX3. Interacts (via C-terminus) with host G3BP1; this interaction inhibits the formation of host stress granules on viral mRNAs and the nsp3-G3BP1 complexes bind viral RNAs and probably orchestrate the assembly of viral replication complexes. Interacts (via C-terminus) with host G3BP2; this interaction inhibits the formation of host stress granules on viral mRNAs and the nsp3-G3BP2 complexes bind viral RNAs and probably orchestrate the assembly of viral replication complexes. Interacts with mRNA-capping enzyme nsP1. Interacts with protease nsP2. interacts with itself. As to quaternary structure, interacts with RNA-directed RNA polymerase nsP4. Interacts with mRNA-capping enzyme nsP1. Interacts with KPNA1/karyopherin-alpha1; this interaction probably allows the active transport of protease nsP2 into the host nucleus. Interacts with host POLR2A/RPB1; this interaction seems to induce the depletion of host POLR2A and may play a role in the transcriptional shutoff induced by protease nsP2. Interacts with host GTF2E2/TF2E2; this interaction seems to induce the depletion of host GTF2E2/TF2E2 and may play a role in the transcriptional shutoff induced by protease nsP2. Mg(2+) is required as a cofactor. Mn(2+) serves as cofactor. Specific enzymatic cleavages in vivo yield mature proteins. The processing of the polyprotein is temporally regulated. In early stages (1.7 hpi), P1234 is first cleaved in trans through its nsP2 protease activity, releasing P123' and nsP4, which associate to form the early replication complex. At the same time, P1234 is also cut at the nsP1/nsP2 site early in infection but with lower efficiency. After replication of the viral minus-strand RNAs (4 hpi), the polyproteins are cut at the nsP1/nsP2 and nsP2/nsP3 sites very efficiently, preventing accumulation of P123' and P1234 and allowing the formation of the late replication complex. NsP3'/nsP4 site is not cleaved anymore and P34 is produced rather than nsP4. Post-translationally, specific enzymatic cleavages in vivo yield mature proteins. The processing of the polyprotein is temporally regulated. In early stages (1.7 hpi), P123 is cleaved at the nsP1/nsP2 site with low efficiency. After replication of the viral minus-strand RNAs (4 hpi), the polyproteins are cut at the nsP1/nsP2 and nsP2/nsP3 sites very efficiently, preventing accumulation of P123 and allowing the formation of the late replication complex. In terms of processing, specific enzymatic cleavages in vivo yield mature proteins. The processing of the polyprotein is temporally regulated. In early stages (1.7 hpi), P123' is cleaved at the nsP1/nsP2 site with low efficiency. After replication of the viral minus-strand RNAs (4 hpi), the polyproteins are cut at the nsP1/nsP2 and nsP2/nsP3 sites very efficiently, preventing accumulation of P123' and allowing the formation of the late replication complex. Palmitoylated by host palmitoyltransferases ZDHHC2 and ZDHHC19. Post-translationally, phosphorylated by host on serines and threonines. In terms of processing, ubiquitinated; targets the protein for rapid degradation via the ubiquitin system. Nsp4 is present in extremely low quantities due to low frequency of translation through the amber stop-codon and the degradation by the ubiquitin pathway.

The protein localises to the host cytoplasmic vesicle membrane. Its subcellular location is the host cell membrane. It localises to the host cell projection. It is found in the host filopodium. The protein resides in the host nucleus. The protein localises to the host cytoplasm. The catalysed reaction is GTP + S-adenosyl-L-methionine = N(7)-methyl-GTP + S-adenosyl-L-homocysteine. It carries out the reaction N(7)-methyl-GTP + L-histidyl-[protein] = N(tele)-(N(7)-methylguanosine 5'-phospho)-L-histidyl-[protein] + diphosphate. It catalyses the reaction N(tele)-(N(7)-methylguanosine 5'-phospho)-L-histidyl-[protein] + a 5'-end diphospho-(purine-ribonucleoside) in mRNA + H(+) = a 5'-end (N(7)-methyl 5'-triphosphoguanosine)-(purine-ribonucleoside) in mRNA + L-histidyl-[protein]. The enzyme catalyses a 5'-end triphospho-ribonucleoside in mRNA + H2O = a 5'-end diphospho-ribonucleoside in mRNA + phosphate + H(+). The catalysed reaction is a ribonucleoside 5'-triphosphate + H2O = a ribonucleoside 5'-diphosphate + phosphate + H(+). It carries out the reaction ATP + H2O = ADP + phosphate + H(+). It catalyses the reaction RNA(n) + a ribonucleoside 5'-triphosphate = RNA(n+1) + diphosphate. The enzyme catalyses RNA(n) + ATP = RNA(n)-3'-adenine ribonucleotide + diphosphate. The catalysed reaction is 4-O-(ADP-D-ribosyl)-L-aspartyl-[protein] + H2O = L-aspartyl-[protein] + ADP-D-ribose + H(+). It carries out the reaction 5-O-(ADP-D-ribosyl)-L-glutamyl-[protein] + H2O = L-glutamyl-[protein] + ADP-D-ribose + H(+). It catalyses the reaction ADP-alpha-D-ribose 1''-phosphate + H2O = ADP-D-ribose + phosphate. In terms of biological role, inactive precursor of the viral replicase, which is activated by cleavages carried out by the viral protease nsP2. Functionally, the early replication complex formed by the polyprotein P123 and nsP4 synthesizes minus-strand RNAs. As soon P123 is cleaved into mature proteins, the plus-strand RNAs synthesis begins. The early replication complex formed by the polyprotein P123' and nsP4 synthesizes minus-strand RNAs. Polyprotein P123' is a short-lived polyprotein that accumulates during early stage of infection. As soon P123' is cleaved into mature proteins, the plus-strand RNAs synthesis begins. Its function is as follows. Cytoplasmic capping enzyme that catalyzes two virus-specific reactions: methyltransferase and nsP1 guanylyltransferase. mRNA-capping is necessary since all viral RNAs are synthesized in the cytoplasm, and host capping enzymes are restricted to the nucleus. The enzymatic reaction involves a covalent link between 7-methyl-GMP and nsP1, whereas eukaryotic capping enzymes form a covalent complex only with GMP. nsP1 capping consists in the following reactions: GTP is first methylated into 7-methyl-GMP and then is covalently linked to nsP1 to form the m7GMp-nsP1 complex from which 7-methyl-GMP complex is transferred to the mRNA to create the cap structure. NsP1 is needed for the initiation of the minus-strand RNAs synthesis. Probably serves as a membrane anchor for the replication complex composed of nsP1-nsP4. Palmitoylated nsP1 is remodeling host cell cytoskeleton, and induces filopodium-like structure formation at the surface of the host cell. In terms of biological role, multifunctional protein whose N-terminus is part of the RNA polymerase complex and displays NTPase, RNA triphosphatase and helicase activities. NTPase and RNA triphosphatase are involved in viral RNA capping and helicase keeps a check on the dsRNA replication intermediates. The C-terminus harbors a protease that specifically cleaves the polyproteins and releases the mature proteins. Required for the shutoff of minus-strand RNAs synthesis. Specifically inhibits the host IFN response by promoting the nuclear export of host STAT1. Induces host transcription shutoff by inducing rapid proteasome-dependent degradation of POLR2A, a catalytic subunit of the RNAPII complex. The resulting inhibition of cellular protein synthesis serves to ensure maximal viral gene expression and to evade host immune response. Functionally, seems to be essential for minus-strand RNAs and subgenomic 26S mRNAs synthesis. Displays mono-ADP-ribosylhydrolase activity. ADP-ribosylation is a post-translational modification that controls various processes of the host cell and the virus probably needs to revert it for optimal viral replication. Binds proteins of FXR family and sequesters them into the viral RNA replication complexes thereby inhibiting the formation of host stress granules on viral mRNAs. The nsp3'-FXR complexes bind viral RNAs and probably orchestrate the assembly of viral replication complexes, thanks to the ability of FXR family members to self-assemble and bind DNA. Seems to be essential for minus-strand RNAs and subgenomic 26S mRNAs synthesis. Displays mono-ADP-ribosylhydrolase activity. ADP-ribosylation is a post-translantional modification that controls various processes of the host cell and the virus probably needs to revert it for optimal viral replication. Binds proteins of G3BP family and sequesters them into the viral RNA replication complexes thereby inhibiting the formation of host stress granules on viral mRNAs. The nsp3-G3BP complexes bind viral RNAs and probably orchestrate the assembly of viral replication complexes, thanks to the ability of G3BP family members to self-assemble and bind DNA. Its function is as follows. RNA dependent RNA polymerase. Replicates genomic and antigenomic RNA by recognizing replications specific signals. The early replication complex formed by the polyprotein P123 and nsP4 synthesizes minus-strand RNAs. The late replication complex composed of fully processed nsP1-nsP4 is responsible for the production of genomic and subgenomic plus-strand RNAs. The core catalytic domain of nsP4 also possesses terminal adenylyltransferase (TATase) activity that is probably involved in maintenance and repair of the poly(A) tail, an element required for replication of the viral genome. This chain is Polyprotein P1234, found in Aedes aegypti (Yellowfever mosquito).